The chain runs to 252 residues: Glycerol-3-phosphate acyltransferase (252 aa).

The next 6 helical transmembrane spans lie at 6–26 (SVAM…YLIG), 66–86 (ILTL…TYII), 104–124 (AILV…PIFF), 140–160 (ITID…ILLI), 164–184 (MSLS…IPGI), and 204–224 (VIKG…ILIY).

This sequence belongs to the PlsY family. Probably interacts with PlsX.

It is found in the cell membrane. The enzyme catalyses an acyl phosphate + sn-glycerol 3-phosphate = a 1-acyl-sn-glycero-3-phosphate + phosphate. Its pathway is lipid metabolism; phospholipid metabolism. Its function is as follows. Catalyzes the transfer of an acyl group from acyl-phosphate (acyl-PO(4)) to glycerol-3-phosphate (G3P) to form lysophosphatidic acid (LPA). This enzyme utilizes acyl-phosphate as fatty acyl donor, but not acyl-CoA or acyl-ACP. This chain is Glycerol-3-phosphate acyltransferase, found in Ureaplasma urealyticum serovar 10 (strain ATCC 33699 / Western).